The chain runs to 564 residues: Putative ABC transporter ATP-binding protein PBPRA2240 (564 aa).

2 ABC transporter domains span residues 3–244 (IEFS…GIRE) and 299–533 (LTVN…ANLT). ATP is bound by residues 37 to 44 (GPSGSGKS) and 332 to 339 (GKNGSGKS).

Belongs to the ABC transporter superfamily.

Its subcellular location is the cell inner membrane. Its function is as follows. Probably part of an ABC transporter complex. Responsible for energy coupling to the transport system. This Photobacterium profundum (strain SS9) protein is Putative ABC transporter ATP-binding protein PBPRA2240.